The sequence spans 426 residues: Gamma-glutamyl phosphate reductase (426 aa).

The protein belongs to the gamma-glutamyl phosphate reductase family.

It localises to the cytoplasm. It catalyses the reaction L-glutamate 5-semialdehyde + phosphate + NADP(+) = L-glutamyl 5-phosphate + NADPH + H(+). It functions in the pathway amino-acid biosynthesis; L-proline biosynthesis; L-glutamate 5-semialdehyde from L-glutamate: step 2/2. Functionally, catalyzes the NADPH-dependent reduction of L-glutamate 5-phosphate into L-glutamate 5-semialdehyde and phosphate. The product spontaneously undergoes cyclization to form 1-pyrroline-5-carboxylate. The chain is Gamma-glutamyl phosphate reductase from Deinococcus geothermalis (strain DSM 11300 / CIP 105573 / AG-3a).